The primary structure comprises 97 residues: MRTGGLREMSQTNEYEVFQKEIKEIKADQKTLEKRVSTLERTSERHDQQIISINEKLNKIEENTTWIKRSITGAIITAVSTGIIGGAIAVFYNLLQK.

The protein to B.licheniformis xpaL1 and to B.subtilis XhlA.

This is an uncharacterized protein from Bacillus licheniformis.